A 130-amino-acid chain; its full sequence is MVMLDVLSNALMSVKNAESRGDRQVIIWPSSKLIGNVLRVMQRYGYVGEFEYVYDGRGGKYVVQLLGRINDIGAIKPRFHVKVDELQKWEEKYLPARQVGILILTTSKGVVSHLEARENRVGGILVAYVY.

This sequence belongs to the universal ribosomal protein uS8 family. Part of the 30S ribosomal subunit.

In terms of biological role, one of the primary rRNA binding proteins, it binds directly to 16S rRNA central domain where it helps coordinate assembly of the platform of the 30S subunit. This is Small ribosomal subunit protein uS8 from Caldivirga maquilingensis (strain ATCC 700844 / DSM 13496 / JCM 10307 / IC-167).